A 45-amino-acid polypeptide reads, in one-letter code: Large ribosomal subunit protein bL36 (45 aa).

The interval methionine 1–lysine 45 is disordered.

It belongs to the bacterial ribosomal protein bL36 family.

This chain is Large ribosomal subunit protein bL36, found in Chlamydia trachomatis serovar L2 (strain ATCC VR-902B / DSM 19102 / 434/Bu).